A 1495-amino-acid chain; its full sequence is Chromosome partition protein MukB (1495 aa).

ATP is bound at residue 60–67; it reads GGNGAGKS. Coiled-coil stretches lie at residues 322–693, 861–1140, and 1233–1289; these read RART…SQPD, EDVM…AKVS, and IDAI…LQNI. The tract at residues 692-809 is flexible hinge; the sequence is PDGSEDARLN…EIPLFGRAAR (118 aa).

Belongs to the SMC family. MukB subfamily. As to quaternary structure, homodimerization via its hinge domain. Binds to DNA via its C-terminal region. Interacts, and probably forms a ternary complex, with MukE and MukF via its C-terminal region. The complex formation is stimulated by calcium or magnesium. Interacts with tubulin-related protein FtsZ.

The protein resides in the cytoplasm. It is found in the nucleoid. Functionally, plays a central role in chromosome condensation, segregation and cell cycle progression. Functions as a homodimer, which is essential for chromosome partition. Involved in negative DNA supercoiling in vivo, and by this means organize and compact chromosomes. May achieve or facilitate chromosome segregation by condensation DNA from both sides of a centrally located replisome during cell division. This chain is Chromosome partition protein MukB, found in Pasteurella multocida (strain Pm70).